We begin with the raw amino-acid sequence, 634 residues long: Pheromone-processing carboxypeptidase KEX1 (634 aa).

A signal peptide spans methionine 1–alanine 24. Topologically, residues alanine 25 to lysine 512 are lumenal. Catalysis depends on residues serine 177 and aspartate 378. N-linked (GlcNAc...) asparagine glycosylation occurs at asparagine 429. Histidine 440 is a catalytic residue. Residues asparagine 468–glutamate 498 form a disordered region. Asparagine 490 carries an N-linked (GlcNAc...) asparagine glycan. A helical transmembrane segment spans residues serine 513–tryptophan 533. Residues arginine 534–arginine 634 lie on the Cytoplasmic side of the membrane. The disordered stretch occupies residues tyrosine 542–arginine 634.

Belongs to the peptidase S10 family.

Its subcellular location is the golgi apparatus. The protein resides in the trans-Golgi network membrane. It catalyses the reaction Preferential release of a C-terminal arginine or lysine residue.. Its function is as follows. Protease with a carboxypeptidase B-like function involved in the C-terminal processing of the lysine and arginine residues from protein precursors. Promotes cell fusion and is involved in the programmed cell death. This chain is Pheromone-processing carboxypeptidase KEX1 (KEX1), found in Pyricularia oryzae (strain 70-15 / ATCC MYA-4617 / FGSC 8958) (Rice blast fungus).